A 337-amino-acid polypeptide reads, in one-letter code: Protein RecA (337 aa).

Position 66–73 (Gly66–Thr73) interacts with ATP.

This sequence belongs to the RecA family.

Its subcellular location is the cytoplasm. Can catalyze the hydrolysis of ATP in the presence of single-stranded DNA, the ATP-dependent uptake of single-stranded DNA by duplex DNA, and the ATP-dependent hybridization of homologous single-stranded DNAs. It interacts with LexA causing its activation and leading to its autocatalytic cleavage. The sequence is that of Protein RecA from Mesomycoplasma hyopneumoniae (strain 232) (Mycoplasma hyopneumoniae).